The primary structure comprises 87 residues: Small ribosomal subunit protein bS20 (87 aa).

The disordered stretch occupies residues 1-25; it reads MANTAQARKRARQSVQRNKHNSSLR. Residues 7-22 are compositionally biased toward basic residues; the sequence is ARKRARQSVQRNKHNS.

The protein belongs to the bacterial ribosomal protein bS20 family.

Binds directly to 16S ribosomal RNA. In Bordetella bronchiseptica (strain ATCC BAA-588 / NCTC 13252 / RB50) (Alcaligenes bronchisepticus), this protein is Small ribosomal subunit protein bS20.